The sequence spans 402 residues: D-galactonate dehydratase family member EGBG_02030 (402 aa).

Asp207 provides a ligand contact to Mg(2+). His209 is a binding site for D-arabinonate. Mg(2+) is bound by residues Glu233 and Glu259. Glu259, Arg280, His309, and Glu336 together coordinate D-arabinonate.

This sequence belongs to the mandelate racemase/muconate lactonizing enzyme family. GalD subfamily.

Has no detectable activity with D-mannonate and with a panel of 70 other acid sugars (in vitro), in spite of the conservation of the residues that are expected to be important for catalytic activity and cofactor binding. May have evolved a divergent function. This is D-galactonate dehydratase family member EGBG_02030 from Enterococcus gallinarum (strain EG2).